A 204-amino-acid polypeptide reads, in one-letter code: Salt stress root protein RS1 (204 aa).

The disordered stretch occupies residues 128–204 (FVPKEEPKPE…AAPAAEPEKQ (77 aa)). The span at 147-161 (TSREVAVEEEKKEEE) shows a compositional bias: basic and acidic residues. A compositionally biased stretch (low complexity) spans 164 to 180 (PAEPAAAAAEAAAPSTE). The segment covering 182-192 (VEEKKEEEKPA) has biased composition (basic and acidic residues). Over residues 193–204 (EAAAPAAEPEKQ) the composition is skewed to low complexity.

This sequence belongs to the DREPP family.

The sequence is that of Salt stress root protein RS1 from Oryza sativa subsp. indica (Rice).